The primary structure comprises 150 residues: Small ribosomal subunit protein uS13 (150 aa).

This sequence belongs to the universal ribosomal protein uS13 family. As to quaternary structure, part of the 30S ribosomal subunit. Forms a loose heterodimer with protein S19. Forms two bridges to the 50S subunit in the 70S ribosome.

Functionally, located at the top of the head of the 30S subunit, it contacts several helices of the 16S rRNA. In the 70S ribosome it contacts the 23S rRNA (bridge B1a) and protein L5 of the 50S subunit (bridge B1b), connecting the 2 subunits; these bridges are implicated in subunit movement. This is Small ribosomal subunit protein uS13 from Aeropyrum pernix (strain ATCC 700893 / DSM 11879 / JCM 9820 / NBRC 100138 / K1).